We begin with the raw amino-acid sequence, 200 residues long: MAFKYAIALSGGIATGKSTVASLLSLNGMRVIDADAISHDILDASSLWVRENFGDEFVDGVSVNRSKLGTLIFSDNIAKKKLESFLHPKIRAEIEQRSIKQDSFMFPYLIDIPLFFESGAYDIKESVVVYVPKELQLERFIKRNGFSREESLRRIESQMDIEEKKKRATWVIDNSGDLKHLQRECEEFVEKIKAKYLEKK.

One can recognise a DPCK domain in the interval 6–200 (AIALSGGIAT…KIKAKYLEKK (195 aa)). An ATP-binding site is contributed by 14–19 (ATGKST).

This sequence belongs to the CoaE family.

The protein localises to the cytoplasm. The catalysed reaction is 3'-dephospho-CoA + ATP = ADP + CoA + H(+). It functions in the pathway cofactor biosynthesis; coenzyme A biosynthesis; CoA from (R)-pantothenate: step 5/5. Its function is as follows. Catalyzes the phosphorylation of the 3'-hydroxyl group of dephosphocoenzyme A to form coenzyme A. The polypeptide is Dephospho-CoA kinase (Sulfurimonas denitrificans (strain ATCC 33889 / DSM 1251) (Thiomicrospira denitrificans (strain ATCC 33889 / DSM 1251))).